The chain runs to 781 residues: MAP7 domain-containing protein 2 (781 aa).

Gly residues predominate over residues 1-32; sequence MERSGGNGGGGGGGGGGGGGYGGSGGGGGGAG. Disordered regions lie at residues 1–37, 50–87, 120–567, and 597–628; these read MERS…PSEG, AEAA…REER, LEEQ…AAKQ, and TRKS…ANKA. Basic and acidic residues-rich tracts occupy residues 71 to 87 and 120 to 158; these read LKSD…REER and LEEQ…RSLE. The stretch at 73-168 forms a coiled coil; sequence SDERQRLAKE…RTQQLELKKK (96 aa). Positions 192-210 are enriched in low complexity; sequence LTLATSTPPLDTGTTTAAA. Composition is skewed to polar residues over residues 211–245 and 257–267; these read ESTN…TVAI and LKSSYKSSPTR. Positions 318 to 328 are enriched in basic and acidic residues; sequence RRCEPPEDISK. Residues 329-348 show a composition bias toward polar residues; it reads RLSSPVKSKITSKTYPQSPK. Composition is skewed to basic and acidic residues over residues 370 to 387, 397 to 436, 453 to 567, and 597 to 613; these read ETPK…EKEG, PREE…EHSA, LAEK…AAKQ, and TRKS…DPKV.

It belongs to the MAP7 family. As to quaternary structure, interacts (via N-terminus) with microtubules; facilitates microtubule stabilization. Interacts with kinesin-1 family members, KIF5A, KIF5B and KIF5C. As to expression, expressed predominantly in the glomerular layer of the olfactory bulb and Sertoli cells of the testis.

It is found in the cytoplasm. Its subcellular location is the cytoskeleton. The protein resides in the microtubule organizing center. The protein localises to the centrosome. It localises to the midbody. It is found in the cell projection. Its subcellular location is the neuron projection. The protein resides in the axon. Its function is as follows. Microtubule-stabilizing protein involved in the control of cell motility and neurite outgrowth. Acts as a critical cofactor for kinesin transport; in the proximal axon regulates kinesin-1 family members, KIF5A, KIF5B and KIF5C recruitment to microtubules and contributes to kinesin-1-mediated transport in the axons. This chain is MAP7 domain-containing protein 2 (Map7d2), found in Mus musculus (Mouse).